We begin with the raw amino-acid sequence, 172 residues long: Small ribosomal subunit protein uS5 (172 aa).

The S5 DRBM domain maps to 17–80; it reads FTEKLIKLNR…ERAKRSMVLF (64 aa).

It belongs to the universal ribosomal protein uS5 family. In terms of assembly, part of the 30S ribosomal subunit. Contacts proteins S4 and S8.

Its function is as follows. With S4 and S12 plays an important role in translational accuracy. Located at the back of the 30S subunit body where it stabilizes the conformation of the head with respect to the body. The polypeptide is Small ribosomal subunit protein uS5 (Treponema pallidum (strain Nichols)).